We begin with the raw amino-acid sequence, 82 residues long: Conotoxin MiK42 (82 aa).

The first 22 residues, 1 to 22 (MKLTCALIVAMLLLTACQLITT), serve as a signal peptide directing secretion. Residues 23 to 49 (DDFRGRQQYRTARSRTKMQNYKIFRLT) constitute a propeptide that is removed on maturation. Intrachain disulfides connect cysteine 52-cysteine 67, cysteine 59-cysteine 70, and cysteine 66-cysteine 80.

The protein belongs to the conotoxin O1 superfamily. As to expression, expressed by the venom duct.

It localises to the secreted. The polypeptide is Conotoxin MiK42 (Conus miles (Soldier cone)).